Consider the following 246-residue polypeptide: 4-hydroxy-tetrahydrodipicolinate reductase (246 aa).

7–12 (GCSGRM) provides a ligand contact to NAD(+). Residue Arg34 coordinates NADP(+). NAD(+) is bound by residues 76-78 (ATT) and 102-105 (CPNT). His135 (proton donor/acceptor) is an active-site residue. A (S)-2,3,4,5-tetrahydrodipicolinate-binding site is contributed by His136. Lys139 functions as the Proton donor in the catalytic mechanism. Residue 145-146 (GT) coordinates (S)-2,3,4,5-tetrahydrodipicolinate.

It belongs to the DapB family.

It localises to the cytoplasm. It carries out the reaction (S)-2,3,4,5-tetrahydrodipicolinate + NAD(+) + H2O = (2S,4S)-4-hydroxy-2,3,4,5-tetrahydrodipicolinate + NADH + H(+). It catalyses the reaction (S)-2,3,4,5-tetrahydrodipicolinate + NADP(+) + H2O = (2S,4S)-4-hydroxy-2,3,4,5-tetrahydrodipicolinate + NADPH + H(+). It participates in amino-acid biosynthesis; L-lysine biosynthesis via DAP pathway; (S)-tetrahydrodipicolinate from L-aspartate: step 4/4. Its function is as follows. Catalyzes the conversion of 4-hydroxy-tetrahydrodipicolinate (HTPA) to tetrahydrodipicolinate. This Chlamydia felis (strain Fe/C-56) (Chlamydophila felis) protein is 4-hydroxy-tetrahydrodipicolinate reductase.